Here is a 434-residue protein sequence, read N- to C-terminus: Protein translocase subunit SecY (434 aa).

10 consecutive transmembrane segments (helical) span residues 19–39 (LFTL…IPGI), 73–93 (IFML…LLVY), 117–137 (YLTI…AKGI), 148–168 (YIFV…WFGE), 179–199 (TSLI…FNLF), 209–229 (VNPV…ILII), 264–284 (VLPV…LSGF), 300–320 (PNGF…TYFY), 362–382 (FSGS…QNIF), and 391–411 (IMGG…LIHI).

Belongs to the SecY/SEC61-alpha family. Component of the Sec protein translocase complex. Heterotrimer consisting of SecY, SecE and SecG subunits. The heterotrimers can form oligomers, although 1 heterotrimer is thought to be able to translocate proteins. Interacts with the ribosome. Interacts with SecDF, and other proteins may be involved. Interacts with SecA.

The protein resides in the cell inner membrane. Its function is as follows. The central subunit of the protein translocation channel SecYEG. Consists of two halves formed by TMs 1-5 and 6-10. These two domains form a lateral gate at the front which open onto the bilayer between TMs 2 and 7, and are clamped together by SecE at the back. The channel is closed by both a pore ring composed of hydrophobic SecY resides and a short helix (helix 2A) on the extracellular side of the membrane which forms a plug. The plug probably moves laterally to allow the channel to open. The ring and the pore may move independently. This is Protein translocase subunit SecY from Borreliella burgdorferi (strain ATCC 35210 / DSM 4680 / CIP 102532 / B31) (Borrelia burgdorferi).